Here is a 419-residue protein sequence, read N- to C-terminus: DNA primase DnaG (419 aa).

The Toprim domain maps to 174 to 260 (DAIIVVEGRS…EVEDLEKDEV (87 aa)). Residues Glu180, Asp222, and Asp224 each contribute to the Mg(2+) site. The tract at residues 277–314 (HNILSESDSKNSHKKHNGKHNNKHSNNKHQQHETKVKE) is disordered. Basic residues predominate over residues 288 to 305 (SHKKHNGKHNNKHSNNKH).

It belongs to the archaeal DnaG primase family. As to quaternary structure, forms a ternary complex with MCM helicase and DNA. Component of the archaeal exosome complex. Mg(2+) is required as a cofactor.

The enzyme catalyses ssDNA + n NTP = ssDNA/pppN(pN)n-1 hybrid + (n-1) diphosphate.. Its function is as follows. RNA polymerase that catalyzes the synthesis of short RNA molecules used as primers for DNA polymerase during DNA replication. Also part of the exosome, which is a complex involved in RNA degradation. Acts as a poly(A)-binding protein that enhances the interaction between heteromeric, adenine-rich transcripts and the exosome. In Methanobrevibacter smithii (strain ATCC 35061 / DSM 861 / OCM 144 / PS), this protein is DNA primase DnaG.